The sequence spans 215 residues: Urease accessory protein UreG (215 aa).

11–18 (GPVGAGKS) is a GTP binding site.

The protein belongs to the SIMIBI class G3E GTPase family. UreG subfamily. In terms of assembly, homodimer. UreD, UreF and UreG form a complex that acts as a GTP-hydrolysis-dependent molecular chaperone, activating the urease apoprotein by helping to assemble the nickel containing metallocenter of UreC. The UreE protein probably delivers the nickel.

The protein resides in the cytoplasm. In terms of biological role, facilitates the functional incorporation of the urease nickel metallocenter. This process requires GTP hydrolysis, probably effectuated by UreG. The sequence is that of Urease accessory protein UreG from Cenarchaeum symbiosum (strain A).